The chain runs to 630 residues: 1-deoxy-D-xylulose-5-phosphate synthase (630 aa).

Thiamine diphosphate contacts are provided by residues His-87 and 128–130; that span reads GHS. Mg(2+) is bound at residue Asp-159. Thiamine diphosphate is bound by residues 160-161, Asn-188, Phe-295, and Glu-377; that span reads GA. Asn-188 is a Mg(2+) binding site.

This sequence belongs to the transketolase family. DXPS subfamily. In terms of assembly, homodimer. The cofactor is Mg(2+). Requires thiamine diphosphate as cofactor.

It catalyses the reaction D-glyceraldehyde 3-phosphate + pyruvate + H(+) = 1-deoxy-D-xylulose 5-phosphate + CO2. It participates in metabolic intermediate biosynthesis; 1-deoxy-D-xylulose 5-phosphate biosynthesis; 1-deoxy-D-xylulose 5-phosphate from D-glyceraldehyde 3-phosphate and pyruvate: step 1/1. In terms of biological role, catalyzes the acyloin condensation reaction between C atoms 2 and 3 of pyruvate and glyceraldehyde 3-phosphate to yield 1-deoxy-D-xylulose-5-phosphate (DXP). This Pseudomonas savastanoi pv. phaseolicola (strain 1448A / Race 6) (Pseudomonas syringae pv. phaseolicola (strain 1448A / Race 6)) protein is 1-deoxy-D-xylulose-5-phosphate synthase.